A 147-amino-acid polypeptide reads, in one-letter code: Large ribosomal subunit protein uL15 (147 aa).

Basic and acidic residues predominate over residues 1–11; sequence MKLHDLRPAKD. The disordered stretch occupies residues 1–57; that stretch reads MKLHDLRPAKDAKKKRKRVGRGTGSGRGFTSGRGSKGQNARSGGGVRPTFEGGQTPL. Gly residues predominate over residues 21 to 35; the sequence is RGTGSGRGFTSGRGS.

The protein belongs to the universal ribosomal protein uL15 family. Part of the 50S ribosomal subunit.

Its function is as follows. Binds to the 23S rRNA. The protein is Large ribosomal subunit protein uL15 of Halothermothrix orenii (strain H 168 / OCM 544 / DSM 9562).